The sequence spans 336 residues: MNTEATHDQNEALTTGARLRNAREQLGLSQQAVAERLCLKVSTVRDIEEDKAPADLASTFLRGYIRSYARLVHIPEEELLPGLEKQAPLRAAKVAPMQSFSLGKRRKKRDGWLMTFTWLVLFVVIGLSGAWWWQDHKAQQEEITTMADQSSAELNNNQSQSVPLDTSTTTDQAMATTPTSPVDTTATNTQTPAATTAPSPTVDSQQNAVVPPSQANVDTAATPAPAATTMPDGAAPLPTDQAGVTTPAADPNALVMNFTADCWLEVTDATGKKLFSGMQRKDGNLNLTGQAPYKLKIGAPAAVQIQYQGKPVDLSRFIRTNQVARLTLNAEQSPAQ.

The Cytoplasmic segment spans residues 1–111 (MNTEATHDQN…LGKRRKKRDG (111 aa)). The HTH cro/C1-type domain maps to 19–71 (LRNAREQLGLSQQAVAERLCLKVSTVRDIEEDKAPADLASTFLRGYIRSYARL). A DNA-binding region (H-T-H motif) is located at residues 30 to 49 (QQAVAERLCLKVSTVRDIEE). The chain crosses the membrane as a helical; Signal-anchor for type II membrane protein span at residues 112 to 132 (WLMTFTWLVLFVVIGLSGAWW). The Periplasmic segment spans residues 133–336 (WQDHKAQQEE…TLNAEQSPAQ (204 aa)). Positions 148 to 164 (DQSSAELNNNQSQSVPL) are enriched in polar residues. Residues 148–248 (DQSSAELNNN…TDQAGVTTPA (101 aa)) form a disordered region. The span at 165-201 (DTSTTTDQAMATTPTSPVDTTATNTQTPAATTAPSPT) shows a compositional bias: low complexity. Polar residues predominate over residues 202 to 217 (VDSQQNAVVPPSQANV). Low complexity predominate over residues 219–236 (TAATPAPAATTMPDGAAP).

It belongs to the RodZ family.

The protein resides in the cell inner membrane. Cytoskeletal protein that is involved in cell-shape control through regulation of the length of the long axis. The chain is Cytoskeleton protein RodZ from Escherichia coli (strain SMS-3-5 / SECEC).